Here is a 777-residue protein sequence, read N- to C-terminus: MNSKDISSKKLTLQGFSKLKLDFNLSSSASPSMGATIVKKRRRKTHDTEEQDENKLLGSLTKKEQISRINAVQNAALLKERNLKEKEAIVKKDSIVKEDSNEKTNDRDSATNTSFKETGKEVLNDVSLVELIENNTDNEDNNKKSLKTNKDIYSKHSKRIIAQSIDDKIEQPSVFKQRFGIRNRKSEFTKGKNISREVIIPDEITIKELSIRMAEDSKSVLKMLKEEMGENYGVDGLVDPEVACEIVEKFNHTAKRVSGANKEKNLFFIEERESLPKKPKPPIVTFMGHVDHGKTSLLDAFRESNVAERELGGITQHIGAYQIITKDKKITFIDTPGHEAFTAMRACGANITNIVVIVVAADDGVMKQTIEAMNHAKAANVSIIVAINKIDRSQSGDVERIISSLPQYDLIPEELGGDVIVVPVSAKKKINLDKLEEAILLIAELMKLEAIEDCRALGWVIESKIDKAKGISATLIVEEGTLKVGDMLVVGTAYGKVRSMVNHLGQREKVALPSSPIEITGLNGIPNAGDKFVVVSSEKQAREIAEYRLELIKEKKEDLSNNNLDMFSRNDSEVEELSVVLKCDVTGSIEAISNSIDKLGKDQVKLNILHKAVGGITDSDVLLAEASSAVILAFNVKVDSKIRDLAKRKGVEIHTYSIIYELIDDMRMYLTKMLKPVTREVRIGSASVRQIFNVSRVGNIIGCYVSDGVVKKDSLIKVMRNNKLIYEGKLKALRRFKDNVKEVGTNFECGVSLDGNVDIKVGDILEAHQLVQEERVL.

2 disordered regions span residues 30-54 (SPSM…QDEN) and 98-117 (EDSN…SFKE). Over residues 98–109 (EDSNEKTNDRDS) the composition is skewed to basic and acidic residues. The region spanning 279–449 (PKPPIVTFMG…LLIAELMKLE (171 aa)) is the tr-type G domain. Residues 288 to 295 (GHVDHGKT) are G1. 288–295 (GHVDHGKT) contacts GTP. Residues 313-317 (GITQH) form a G2 region. The G3 stretch occupies residues 334–337 (DTPG). Residues 334 to 338 (DTPGH) and 388 to 391 (NKID) contribute to the GTP site. The tract at residues 388-391 (NKID) is G4. The segment at 425 to 427 (SAK) is G5.

This sequence belongs to the TRAFAC class translation factor GTPase superfamily. Classic translation factor GTPase family. IF-2 subfamily.

Its subcellular location is the cytoplasm. Functionally, one of the essential components for the initiation of protein synthesis. Protects formylmethionyl-tRNA from spontaneous hydrolysis and promotes its binding to the 30S ribosomal subunits. Also involved in the hydrolysis of GTP during the formation of the 70S ribosomal complex. The sequence is that of Translation initiation factor IF-2 from Wolbachia sp. subsp. Brugia malayi (strain TRS).